The primary structure comprises 77 residues: Acyl carrier protein (77 aa).

One can recognise a Carrier domain in the interval 1–75; the sequence is MVFEKVKDII…DVVNYIKAHT (75 aa). The residue at position 35 (Ser35) is an O-(pantetheine 4'-phosphoryl)serine.

This sequence belongs to the acyl carrier protein (ACP) family. In terms of processing, 4'-phosphopantetheine is transferred from CoA to a specific serine of apo-ACP by AcpS. This modification is essential for activity because fatty acids are bound in thioester linkage to the sulfhydryl of the prosthetic group.

The protein resides in the cytoplasm. It functions in the pathway lipid metabolism; fatty acid biosynthesis. Carrier of the growing fatty acid chain in fatty acid biosynthesis. In Clostridium acetobutylicum (strain ATCC 824 / DSM 792 / JCM 1419 / IAM 19013 / LMG 5710 / NBRC 13948 / NRRL B-527 / VKM B-1787 / 2291 / W), this protein is Acyl carrier protein.